Here is a 315-residue protein sequence, read N- to C-terminus: Tubulin beta-1 chain (315 aa).

GTP-binding residues include Ser6, Gly10, Thr11, Gly12, Asn72, and Asn94. Residues 295-315 are disordered; it reads DATADEEEYYEDEEEEEAQGM. The segment covering 297 to 315 has biased composition (acidic residues); sequence TADEEEYYEDEEEEEAQGM.

It belongs to the tubulin family. Dimer of alpha and beta chains. A typical microtubule is a hollow water-filled tube with an outer diameter of 25 nm and an inner diameter of 15 nM. Alpha-beta heterodimers associate head-to-tail to form protofilaments running lengthwise along the microtubule wall with the beta-tubulin subunit facing the microtubule plus end conferring a structural polarity. Microtubules usually have 13 protofilaments but different protofilament numbers can be found in some organisms and specialized cells. It depends on Mg(2+) as a cofactor.

It localises to the cytoplasm. The protein localises to the cytoskeleton. In terms of biological role, tubulin is the major constituent of microtubules, a cylinder consisting of laterally associated linear protofilaments composed of alpha- and beta-tubulin heterodimers. Microtubules grow by the addition of GTP-tubulin dimers to the microtubule end, where a stabilizing cap forms. Below the cap, tubulin dimers are in GDP-bound state, owing to GTPase activity of alpha-tubulin. In Daucus carota (Wild carrot), this protein is Tubulin beta-1 chain (TUBB1).